The following is a 119-amino-acid chain: Large ribosomal subunit protein bL20 (119 aa).

Belongs to the bacterial ribosomal protein bL20 family.

Functionally, binds directly to 23S ribosomal RNA and is necessary for the in vitro assembly process of the 50S ribosomal subunit. It is not involved in the protein synthesizing functions of that subunit. In Deinococcus geothermalis (strain DSM 11300 / CIP 105573 / AG-3a), this protein is Large ribosomal subunit protein bL20.